The chain runs to 246 residues: 14-3-3 protein beta/alpha (246 aa).

An N-acetylmethionine modification is found at Met-1. The residue at position 2 (Thr-2) is an N-acetylthreonine; in 14-3-3 protein beta/alpha, N-terminally processed. Residue Thr-2 is modified to Phosphothreonine. Lys-5 is modified (N6-acetyllysine). At Lys-51 the chain carries N6-acetyllysine; alternate. A Glycyl lysine isopeptide (Lys-Gly) (interchain with G-Cter in SUMO2); alternate cross-link involves residue Lys-51. At Ser-60 the chain carries Phosphoserine. At Lys-70 the chain carries N6-acetyllysine. A 3'-nitrotyrosine mark is found at Tyr-84 and Tyr-106. Lys-117 carries the N6-acetyllysine modification. Residues Ser-186 and Ser-232 each carry the phosphoserine modification.

It belongs to the 14-3-3 family. In terms of assembly, homodimer. Interacts with SAMSN1 and PRKCE. Interacts with AKAP13. Interacts with SSH1 and TORC2/CRTC2. Interacts with ABL1; the interaction results in cytoplasmic location of ABL1 and inhibition of cABL-mediated apoptosis. Interacts with ROR2 (dimer); the interaction results in phosphorylation of YWHAB on tyrosine residues. Interacts with GAB2. Interacts with YAP1 (phosphorylated form). Interacts with the phosphorylated (by AKT1) form of SRPK2. Interacts with PKA-phosphorylated AANAT. Interacts with MYO1C. Interacts with SIRT2. Interacts with the 'Thr-369' phosphorylated form of DAPK2. Interacts with PI4KB, TBC1D22A and TBC1D22B. Interacts with the 'Ser-1134' and 'Ser-1161' phosphorylated form of SOS1. Interacts (via phosphorylated form) with YWHAB; this interaction occurs in a protein kinase AKT1-dependent manner. Interacts with SLITRK1. Interacts with SYNPO2 (phosphorylated form); YWHAB competes with ACTN2 for interaction with SYNPO2. Interacts with RIPOR2 (via phosphorylated form); this interaction occurs in a chemokine-dependent manner and does not compete for binding of RIPOR2 with RHOA nor blocks inhibition of RIPOR2-mediated RHOA activity. Interacts with MARK2 and MARK3. Interacts with TESK1; the interaction is dependent on the phosphorylation of TESK1 'Ser-439' and inhibits TESK1 kinase activity. Interacts with MEFV. Interacts with HDAC4. Interacts with ADAM22 (via C-terminus). The alpha, brain-specific form differs from the beta form in being phosphorylated. Phosphorylated on Ser-60 by protein kinase C delta type catalytic subunit in a sphingosine-dependent fashion. Post-translationally, isoform Short contains a N-acetylmethionine at position 1.

The protein resides in the cytoplasm. The protein localises to the melanosome. Functionally, adapter protein implicated in the regulation of a large spectrum of both general and specialized signaling pathways. Binds to a large number of partners, usually by recognition of a phosphoserine or phosphothreonine motif. Binding generally results in the modulation of the activity of the binding partner. Negative regulator of osteogenesis. Blocks the nuclear translocation of the phosphorylated form (by AKT1) of SRPK2 and antagonizes its stimulatory effect on cyclin D1 expression resulting in blockage of neuronal apoptosis elicited by SRPK2. Negative regulator of signaling cascades that mediate activation of MAP kinases via AKAP13. The sequence is that of 14-3-3 protein beta/alpha (Ywhab) from Rattus norvegicus (Rat).